The sequence spans 142 residues: Small ribosomal subunit protein bS6 (142 aa).

Positions Asn110–Glu133 are enriched in basic and acidic residues. The segment at Asn110–Glu142 is disordered.

This sequence belongs to the bacterial ribosomal protein bS6 family.

Functionally, binds together with bS18 to 16S ribosomal RNA. The sequence is that of Small ribosomal subunit protein bS6 from Helicobacter pylori (strain HPAG1).